The following is a 208-amino-acid chain: Putative 3-methyladenine DNA glycosylase (208 aa).

The protein belongs to the DNA glycosylase MPG family.

This is Putative 3-methyladenine DNA glycosylase from Lactobacillus johnsonii (strain CNCM I-12250 / La1 / NCC 533).